The sequence spans 539 residues: 4-hydroxybenzoate--CoA/benzoate--CoA ligase (539 aa).

It belongs to the ATP-dependent AMP-binding enzyme family. Benzoate-CoA ligase subfamily. In terms of assembly, homodimer. The N-terminus is blocked.

It catalyses the reaction 4-hydroxybenzoate + ATP + CoA = 4-hydroxybenzoyl-CoA + AMP + diphosphate. It carries out the reaction benzoate + ATP + CoA = benzoyl-CoA + AMP + diphosphate. Catalyzes the ligation of 4-hydroxybenzoate, benzoate or cyclohex-1,4-dienecarboxylate and CoA at the expense of ATP. The enzyme shows low activity towards cyclo-2,5-dienecarboxylate, 4-fluorobenzoate, 4-chlorobenzoate and 2-methoxybenzoate. The sequence is that of 4-hydroxybenzoate--CoA/benzoate--CoA ligase (hbaA) from Rhodopseudomonas palustris (strain ATCC BAA-98 / CGA009).